Consider the following 517-residue polypeptide: Splicing factor U2AF 59 kDa subunit (517 aa).

The segment covering 1–13 (MDLSSRLSSGSSR) has biased composition (low complexity). A disordered region spans residues 1 to 112 (MDLSSRLSSG…PSRERSVRSI (112 aa)). A compositionally biased stretch (basic and acidic residues) spans 20 to 89 (DYRDEEPRRE…RRYDDYEPRS (70 aa)). 2 RRM domains span residues 310 to 388 (DKIY…FACV) and 418 to 509 (RVLQ…FYGE).

It belongs to the splicing factor SR family. As to quaternary structure, forms a heterodimer with the U2AF small subunit. Can also form a homodimer. U2AF large subunit (U2AF59), U2AF small subunit (U2AF23) and SF1 (bpb1) interact to form a complex required for complex A formation. Interacts with wat1/pop3.

Its subcellular location is the nucleus. Its function is as follows. Necessary for the splicing of pre-mRNA. The SF1-U2AF59-U2AF23 complex has a role in the recognition of the branch site (5'-UACUAAC-3'), the pyrimidine tract and the 3'-splice site at the 3'-end of introns. This chain is Splicing factor U2AF 59 kDa subunit (prp2), found in Schizosaccharomyces pombe (strain 972 / ATCC 24843) (Fission yeast).